A 237-amino-acid chain; its full sequence is MSIHISARVGDIADKILLPGDPLRAKFIAENFLEDAVCFNEIRGMLGYTGTYKGHRVSVMGTGMGMPSISIYARELIVDYGVKTLIRVGTAGSIDPNVHVRELVLAQAAATNSNIIRNDFPEFDFPQIADFGLLDIAYHIAKDLGMTTHVGSVLSSDVFYSNMPERNMALGKLGVKAIEMEAAALYYLAAQHQVKALGIMTISDNLNDPSEDTSAEERQTTFTDMMKVGLETLIAND.

Histidine 4 is a binding site for a purine D-ribonucleoside. Residues glycine 20, arginine 24, arginine 43, and 87–90 (RVGT) each bind phosphate. Residues 179-181 (EME) and 203-204 (SD) contribute to the a purine D-ribonucleoside site. The active-site Proton donor is aspartate 204.

Belongs to the PNP/UDP phosphorylase family. Homohexamer; trimer of homodimers.

It catalyses the reaction a purine D-ribonucleoside + phosphate = a purine nucleobase + alpha-D-ribose 1-phosphate. The enzyme catalyses a purine 2'-deoxy-D-ribonucleoside + phosphate = a purine nucleobase + 2-deoxy-alpha-D-ribose 1-phosphate. Functionally, catalyzes the reversible phosphorolytic breakdown of the N-glycosidic bond in the beta-(deoxy)ribonucleoside molecules, with the formation of the corresponding free purine bases and pentose-1-phosphate. The chain is Purine nucleoside phosphorylase DeoD-type from Streptococcus uberis (strain ATCC BAA-854 / 0140J).